Reading from the N-terminus, the 499-residue chain is MLSTSSRSFKNKFRAAFWPVHNYELGKFIPMSTLMFCILFNQNVLRILKDSILISEISAEIAGFAKVYCVTPAAALFVIIYAKMINYLTFEKIFYYLSAFFISFFVLFTFVIYPNIHIFHVHPNNLADWMERYPHFKWYISLVGNWGYIVYYSLAELWPNIFYVLLFWQFANELTTTEEAKRFYTLFSLFGNSSLILVGFLMMNLSSEDTIIKKFMSISDSKITLVQVSTTIVAIVAIICCLLVRFISKNVFTNPLFYAKAKSGRSTSERMGLIKSFKYIAKSKYLWLLLICSAAFGFAINLVEAVWKAKIKELYPTVNTYAEFNSLYILWTGVAIMVMTIIGNNIMRMHNWFVAAVISPVIIMVTGILFFVLIVFDQQILSLFDGAILMSPLALAVSIGGIQNILAKGTKYSIWDTSREMLYIPLDEELKTKGKAAVDVISAKVGKSSSGLVQSIIFTLVPTATFTLISPILMVVFTFVCLAWIYAVRKIYCEYQKIA.

The next 11 helical transmembrane spans lie at 25 to 45 (LGKF…QNVL), 61 to 81 (IAGF…VIIY), 93 to 113 (IFYY…FVIY), 148 to 168 (YIVY…LLFW), 183 to 203 (FYTL…FLMM), 223 to 243 (ITLV…CCLL), 286 to 306 (LWLL…VEAV), 327 to 347 (LYIL…NNIM), 356 to 376 (AVIS…LIVF), 380 to 400 (ILSL…VSIG), and 468 to 488 (LISP…IYAV).

This sequence belongs to the ADP/ATP translocase tlc family.

Its subcellular location is the cell membrane. Provides the rickettsial cell with host ATP in exchange for rickettsial ADP. This is an obligate exchange system. This energy acquiring activity is an important component of rickettsial parasitism. The chain is ADP,ATP carrier protein 5 (tlcE) from Rickettsia conorii (strain ATCC VR-613 / Malish 7).